Reading from the N-terminus, the 382-residue chain is Mannitol-1-phosphate 5-dehydrogenase (382 aa).

3–14 (ALHFGAGNIGRG) is a binding site for NAD(+). Position 269 is an N6-acetyllysine (K269).

Belongs to the mannitol dehydrogenase family.

It carries out the reaction D-mannitol 1-phosphate + NAD(+) = beta-D-fructose 6-phosphate + NADH + H(+). This is Mannitol-1-phosphate 5-dehydrogenase from Escherichia coli O17:K52:H18 (strain UMN026 / ExPEC).